Here is a 247-residue protein sequence, read N- to C-terminus: Glucosamine-6-phosphate deaminase (247 aa).

The active-site Proton acceptor; for enolization step is D67. N136 acts as the For ring-opening step in catalysis. The active-site Proton acceptor; for ring-opening step is the H138. E143 serves as the catalytic For ring-opening step.

Belongs to the glucosamine/galactosamine-6-phosphate isomerase family. NagB subfamily.

The catalysed reaction is alpha-D-glucosamine 6-phosphate + H2O = beta-D-fructose 6-phosphate + NH4(+). It functions in the pathway amino-sugar metabolism; N-acetylneuraminate degradation; D-fructose 6-phosphate from N-acetylneuraminate: step 5/5. Its function is as follows. Catalyzes the reversible isomerization-deamination of glucosamine 6-phosphate (GlcN6P) to form fructose 6-phosphate (Fru6P) and ammonium ion. This is Glucosamine-6-phosphate deaminase from Shouchella clausii (strain KSM-K16) (Alkalihalobacillus clausii).